The chain runs to 473 residues: Phenolic acid decarboxylase (473 aa).

Asn160, His182, and Glu224 together coordinate Mn(2+). Residues 160 to 165 (NVGIYR) and 181 to 182 (QH) contribute to the prenylated FMN site. The active-site Proton donor is the Glu273.

This sequence belongs to the UbiD family. YclC subfamily. Prenylated FMN serves as cofactor. The cofactor is Mn(2+).

The catalysed reaction is 4-hydroxybenzoate + H(+) = phenol + CO2. The enzyme catalyses vanillate + H(+) = guaiacol + CO2. Its function is as follows. Involved in the non-oxidative decarboxylation and detoxification of phenolic derivatives under both aerobic and anaerobic conditions. Phenolic acid decarboxylase that catalyzes the reversible decarboxylation of 4-hydroxybenzoate and vanillate. Could also catalyze the decarboxylation of salicylate. Is not active on di- and tri-hydroxybenzoate derivatives. This is Phenolic acid decarboxylase from Bacillus subtilis (strain 168).